The sequence spans 427 residues: 3-phosphoshikimate 1-carboxyvinyltransferase (427 aa).

Residues Lys21, Ser22, and Arg26 each coordinate 3-phosphoshikimate. Position 21 (Lys21) interacts with phosphoenolpyruvate. Residues Gly93 and Arg121 each coordinate phosphoenolpyruvate. Residues Ser166, Gln168, Asp314, and Lys341 each contribute to the 3-phosphoshikimate site. Gln168 serves as a coordination point for phosphoenolpyruvate. Residue Asp314 is the Proton acceptor of the active site. The phosphoenolpyruvate site is built by Arg345 and Arg387.

It belongs to the EPSP synthase family. In terms of assembly, monomer.

The protein localises to the cytoplasm. The enzyme catalyses 3-phosphoshikimate + phosphoenolpyruvate = 5-O-(1-carboxyvinyl)-3-phosphoshikimate + phosphate. Its pathway is metabolic intermediate biosynthesis; chorismate biosynthesis; chorismate from D-erythrose 4-phosphate and phosphoenolpyruvate: step 6/7. Its function is as follows. Catalyzes the transfer of the enolpyruvyl moiety of phosphoenolpyruvate (PEP) to the 5-hydroxyl of shikimate-3-phosphate (S3P) to produce enolpyruvyl shikimate-3-phosphate and inorganic phosphate. The sequence is that of 3-phosphoshikimate 1-carboxyvinyltransferase from Alkaliphilus oremlandii (strain OhILAs) (Clostridium oremlandii (strain OhILAs)).